The following is a 217-amino-acid chain: Large ribosomal subunit protein uL3 (217 aa).

It belongs to the universal ribosomal protein uL3 family. Part of the 50S ribosomal subunit. Forms a cluster with proteins L14 and L19.

One of the primary rRNA binding proteins, it binds directly near the 3'-end of the 23S rRNA, where it nucleates assembly of the 50S subunit. The chain is Large ribosomal subunit protein uL3 from Brachyspira hyodysenteriae (strain ATCC 49526 / WA1).